The sequence spans 450 residues: UDP-N-acetylmuramoylalanine--D-glutamate ligase (450 aa).

111–117 contacts ATP; that stretch reads GTNGKST.

Belongs to the MurCDEF family.

Its subcellular location is the cytoplasm. The catalysed reaction is UDP-N-acetyl-alpha-D-muramoyl-L-alanine + D-glutamate + ATP = UDP-N-acetyl-alpha-D-muramoyl-L-alanyl-D-glutamate + ADP + phosphate + H(+). Its pathway is cell wall biogenesis; peptidoglycan biosynthesis. Functionally, cell wall formation. Catalyzes the addition of glutamate to the nucleotide precursor UDP-N-acetylmuramoyl-L-alanine (UMA). This chain is UDP-N-acetylmuramoylalanine--D-glutamate ligase, found in Rickettsia bellii (strain RML369-C).